Consider the following 201-residue polypeptide: Putative tRNA-binding protein YtpR (201 aa).

Positions 90–200 (VDLSPKFVVG…GDYEAGDAFQ (111 aa)) constitute a tRNA-binding domain.

In Bacillus subtilis (strain 168), this protein is Putative tRNA-binding protein YtpR (ytpR).